A 110-amino-acid polypeptide reads, in one-letter code: Subtilisin inhibitor-like protein 1 (110 aa).

2 disulfide bridges follow: Cys30/Cys44 and Cys68/Cys98.

This sequence belongs to the protease inhibitor I16 (SSI) family. Homodimer.

It is found in the secreted. Its function is as follows. Strong inhibitor of subtilisin BPN'. This is Subtilisin inhibitor-like protein 1 from Streptomyces cacaoi.